Here is a 214-residue protein sequence, read N- to C-terminus: ATP phosphoribosyltransferase (214 aa).

It belongs to the ATP phosphoribosyltransferase family. Short subfamily. As to quaternary structure, heteromultimer composed of HisG and HisZ subunits.

Its subcellular location is the cytoplasm. The catalysed reaction is 1-(5-phospho-beta-D-ribosyl)-ATP + diphosphate = 5-phospho-alpha-D-ribose 1-diphosphate + ATP. It participates in amino-acid biosynthesis; L-histidine biosynthesis; L-histidine from 5-phospho-alpha-D-ribose 1-diphosphate: step 1/9. In terms of biological role, catalyzes the condensation of ATP and 5-phosphoribose 1-diphosphate to form N'-(5'-phosphoribosyl)-ATP (PR-ATP). Has a crucial role in the pathway because the rate of histidine biosynthesis seems to be controlled primarily by regulation of HisG enzymatic activity. The polypeptide is ATP phosphoribosyltransferase (Alcanivorax borkumensis (strain ATCC 700651 / DSM 11573 / NCIMB 13689 / SK2)).